Reading from the N-terminus, the 568-residue chain is MSVSVFNRCWSKVILETLVRQGVSHLCIAPGSRSTPLTLEAVRLQNAGAVTCHTHFDERGLGFFALGIAKATQSPVAIIVTSGTATANLYPAIIEARQTGVNLFVLTADRPPELWECGANQAILQQNMFGQYPVANVNLPKPNADYSAQWLISLLEQAVFQQKQQGGVVHINVPFAEPLYDATDEEVNSHSWLQPLQRWLIQNKSWINVEAQQNEVLMHENWDHWRTKRGVVVVGQLPAEQAMGINSWASAMGWVLLTDIQSGVVPTTPYEDIWLANQTVREKLLQADIVIQFGARFISKRINQFLQAFKGEFWLVEQSGKALDPYHHSLTRFNAKVHHWLRAHPPLRQKPWLLEPLALSKFCATFIEQQVGGNLTEASLALRLPTLLPYNGVLFLGNSLLVRLVDALTQLPESYPVYTNRGASGIDGLLATAAGIGIGSNKPVVAVIGDTSTLYDLNSFALFKNVTQPTLIFVINNNGGAIFDMLPVDEQVKDQFYRLPHNGDFSQIAAMFDLKYAHPYTWADLNSVVKQAYSRRKATLIEIKTNPSDGSSLYKRLIEQISHAVIGA.

Belongs to the TPP enzyme family. MenD subfamily. As to quaternary structure, homodimer. Mg(2+) serves as cofactor. Requires Mn(2+) as cofactor. It depends on thiamine diphosphate as a cofactor.

The catalysed reaction is isochorismate + 2-oxoglutarate + H(+) = 5-enolpyruvoyl-6-hydroxy-2-succinyl-cyclohex-3-ene-1-carboxylate + CO2. It functions in the pathway quinol/quinone metabolism; 1,4-dihydroxy-2-naphthoate biosynthesis; 1,4-dihydroxy-2-naphthoate from chorismate: step 2/7. It participates in quinol/quinone metabolism; menaquinone biosynthesis. Catalyzes the thiamine diphosphate-dependent decarboxylation of 2-oxoglutarate and the subsequent addition of the resulting succinic semialdehyde-thiamine pyrophosphate anion to isochorismate to yield 2-succinyl-5-enolpyruvyl-6-hydroxy-3-cyclohexene-1-carboxylate (SEPHCHC). In Haemophilus influenzae (strain ATCC 51907 / DSM 11121 / KW20 / Rd), this protein is 2-succinyl-5-enolpyruvyl-6-hydroxy-3-cyclohexene-1-carboxylate synthase.